The chain runs to 572 residues: Urease subunit alpha (572 aa).

The region spanning 136–572 (GGIDTHIHWI…VPLAQRYFLF (437 aa)) is the Urease domain. Positions 141, 143, and 224 each coordinate Ni(2+). K224 carries the post-translational modification N6-carboxylysine. H226 is a substrate binding site. Ni(2+) is bound by residues H253 and H279. H327 (proton donor) is an active-site residue. Residue D367 participates in Ni(2+) binding.

This sequence belongs to the metallo-dependent hydrolases superfamily. Urease alpha subunit family. Heterotrimer of UreA (gamma), UreB (beta) and UreC (alpha) subunits. Three heterotrimers associate to form the active enzyme. The cofactor is Ni cation. Carboxylation allows a single lysine to coordinate two nickel ions.

The protein resides in the cytoplasm. It carries out the reaction urea + 2 H2O + H(+) = hydrogencarbonate + 2 NH4(+). The protein operates within nitrogen metabolism; urea degradation; CO(2) and NH(3) from urea (urease route): step 1/1. The sequence is that of Urease subunit alpha from Actinobacillus pleuropneumoniae serotype 5b (strain L20).